An 82-amino-acid chain; its full sequence is Sec-independent protein translocase protein TatA (82 aa).

Residues 1–21 (MGGISIWQLLIIAVIIVLLFG) form a helical membrane-spanning segment. The disordered stretch occupies residues 48–82 (PAKEAKKDADFVPQNLEKKEAETVEKQKQNDKEQA).

It belongs to the TatA/E family. In terms of assembly, the Tat system comprises two distinct complexes: a TatABC complex, containing multiple copies of TatA, TatB and TatC subunits, and a separate TatA complex, containing only TatA subunits. Substrates initially bind to the TatABC complex, which probably triggers association of the separate TatA complex to form the active translocon.

It localises to the cell inner membrane. Part of the twin-arginine translocation (Tat) system that transports large folded proteins containing a characteristic twin-arginine motif in their signal peptide across membranes. TatA could form the protein-conducting channel of the Tat system. The chain is Sec-independent protein translocase protein TatA from Aliivibrio fischeri (strain ATCC 700601 / ES114) (Vibrio fischeri).